The following is a 204-amino-acid chain: Ribonuclease HII (204 aa).

The 197-residue stretch at 1–197 folds into the RNase H type-2 domain; the sequence is MTLGIDEAGR…KNRILNPKLL (197 aa). D6, E7, and D103 together coordinate a divalent metal cation.

Belongs to the RNase HII family. Mn(2+) serves as cofactor. It depends on Mg(2+) as a cofactor.

The protein resides in the cytoplasm. It carries out the reaction Endonucleolytic cleavage to 5'-phosphomonoester.. Endonuclease that specifically degrades the RNA of RNA-DNA hybrids. This chain is Ribonuclease HII, found in Helicobacter pylori (strain HPAG1).